The sequence spans 272 residues: Merozoite surface protein 2 (272 aa).

The N-terminal stretch at 1–20 (MKVIKTLSIINFFIFVTFNI) is a signal peptide. N-linked (GlcNAc...) asparagine glycosylation is found at N22 and N36. Residues 44–198 (AESKPSTGAG…EQTESPELQS (155 aa)) form a polymorphic region region. Residues 45–233 (ESKPSTGAGG…DSQKECTDGN (189 aa)) are disordered. Positions 51 to 82 (GAGGSAGGSAGGSAGGSAGGSAGGSAGSGDGN) are enriched in gly residues. 6 consecutive repeat copies span residues 53–56 (GGSA), 57–60 (GGSA), 61–64 (GGSA), 65–68 (GGSA), 69–72 (GGSA), and 73–76 (GGSA). The tract at residues 53 to 76 (GGSAGGSAGGSAGGSAGGSAGGSA) is 6 X 4 AA tandem repeats of G-G-S-A. The segment covering 83–119 (GADAEGSSSTPATTTTTKTTTTTTTTNDAEASTSTSS) has biased composition (low complexity). The span at 122 to 137 (PNHKNAETNPKGKGEV) shows a compositional bias: basic and acidic residues. Polar residues-rich tracts occupy residues 139–165 (EPNQ…NVPP) and 172–200 (KSPT…QSAP). N149 carries N-linked (GlcNAc...) asparagine glycosylation. N221 carries an N-linked (GlcNAc...) asparagine glycan. A disulfide bridge links C229 with C237. Residues N245 and N246 are each glycosylated (N-linked (GlcNAc...) asparagine). N246 carries GPI-anchor amidated asparagine lipidation. The propeptide at 247–272 (SSNIASINKFVVLISATLVLSFAIFI) is removed in mature form.

It localises to the cell membrane. Its function is as follows. May play a role in the merozoite attachment to the erythrocyte. This Plasmodium falciparum (isolate 3D7) protein is Merozoite surface protein 2.